We begin with the raw amino-acid sequence, 202 residues long: ADP-ribosylation factor-like protein 15 (202 aa).

GTP contacts are provided by residues 39–46, 82–86, and 142–145; these read GLTGSGKT, ELGGA, and NHQD.

It belongs to the small GTPase superfamily. Arf family.

This is ADP-ribosylation factor-like protein 15 (ARL15) from Bos taurus (Bovine).